Reading from the N-terminus, the 130-residue chain is Small ribosomal subunit protein uS8A (130 aa).

Belongs to the universal ribosomal protein uS8 family. Component of the small ribosomal subunit (SSU). Mature yeast ribosomes consist of a small (40S) and a large (60S) subunit. The 40S small subunit contains 1 molecule of ribosomal RNA (18S rRNA) and 33 different proteins (encoded by 57 genes). The large 60S subunit contains 3 rRNA molecules (25S, 5.8S and 5S rRNA) and 46 different proteins (encoded by 81 genes).

Its subcellular location is the cytoplasm. In terms of biological role, component of the ribosome, a large ribonucleoprotein complex responsible for the synthesis of proteins in the cell. The small ribosomal subunit (SSU) binds messenger RNAs (mRNAs) and translates the encoded message by selecting cognate aminoacyl-transfer RNA (tRNA) molecules. The large subunit (LSU) contains the ribosomal catalytic site termed the peptidyl transferase center (PTC), which catalyzes the formation of peptide bonds, thereby polymerizing the amino acids delivered by tRNAs into a polypeptide chain. The nascent polypeptides leave the ribosome through a tunnel in the LSU and interact with protein factors that function in enzymatic processing, targeting, and the membrane insertion of nascent chains at the exit of the ribosomal tunnel. The sequence is that of Small ribosomal subunit protein uS8A from Saccharomyces cerevisiae (strain ATCC 204508 / S288c) (Baker's yeast).